A 370-amino-acid polypeptide reads, in one-letter code: MSLYHSLSIFLLLSLCHGSYSLQPRRVPHLDGILPNGNFEITPLKSNMKGRQIIGANSLPHWEIAGHVELVSGGPQPGGFYFPVPRGVHAVRLGNLGTISQNVRVKSGLVYSLTFGATRTCAQDENIKVSVPGQANELPLQTVFSSDGGDTYAWAFKATSDVVKVTFHNPGVQEDRTCGPLLDVVAIKEILPLRYTRGNLVKNGGFEIGPHVFANFSTGILIPARIQDFISPLPGWIVESLKPVKYIDRRHFKVPYGQGAVELVAGRESAIAQIIRTIAGKAYMLSFAVGDAQNGCHGSMMVEAFAGREPFKLSFMSEGKGAFKTGHFRFVADSDRTRLTFYSAFYHTKLHDFGHLCGPVLDSVVVTLAR.

The first 21 residues, 1 to 21, serve as a signal peptide directing secretion; that stretch reads MSLYHSLSIFLLLSLCHGSYS. Residue Asn215 is glycosylated (N-linked (GlcNAc...) asparagine).

Expressed in primary and lateral roots, stigmatic papillae and hypocotyls.

The protein localises to the secreted. The protein resides in the cell wall. Prevents hypocotyl epidermal cells elongation by modulating the pectin status in cell walls. Likely regulates pectin methylesterification degree during cell separation and elongation, including upon root-knot nematode Meloidogyne incognita infection. The polypeptide is Protein TEEBE (Arabidopsis thaliana (Mouse-ear cress)).